A 331-amino-acid chain; its full sequence is MKMYYDADADLSLLEGKIVAVIGYGSQGHAQAQNLKDSGVNVIIGLRPDSNRVKEAQAYGFEVYSVAEAAAKADIIQILIPDEKQGKVYREEIAPYLTEGKALCFSHGFNIHFGQIQPPKNVDVFMVAPKSPGHMVRRMYTMGAGVPTLIAVYQDATGRAKDLALAYAKGTGGTRAGVIETTFREETETDLFGEQAVLCGGASALVKAGFETLVEAGYAPEMAYFECLHELKLIVDLMYEGGISWMRYSISDTAQWGDMNIGPRIITEETKKEMKKVLREIQEGTFAKEWLLENEVNRPKFNALAKADENHEIEIVGKKLRAMMPWLKTAK.

Positions 1 to 181 constitute a KARI N-terminal Rossmann domain; it reads MKMYYDADAD…GGTRAGVIET (181 aa). NADP(+) contacts are provided by residues 24 to 27, arginine 47, serine 50, and 82 to 85; these read YGSQ and DEKQ. The active site involves histidine 107. Residue glycine 133 coordinates NADP(+). In terms of domain architecture, KARI C-terminal knotted spans 182-327; the sequence is TFREETETDL…KKLRAMMPWL (146 aa). Aspartate 190, glutamate 194, glutamate 226, and glutamate 230 together coordinate Mg(2+). Substrate is bound at residue serine 251.

This sequence belongs to the ketol-acid reductoisomerase family. It depends on Mg(2+) as a cofactor.

The enzyme catalyses (2R)-2,3-dihydroxy-3-methylbutanoate + NADP(+) = (2S)-2-acetolactate + NADPH + H(+). It carries out the reaction (2R,3R)-2,3-dihydroxy-3-methylpentanoate + NADP(+) = (S)-2-ethyl-2-hydroxy-3-oxobutanoate + NADPH + H(+). Its pathway is amino-acid biosynthesis; L-isoleucine biosynthesis; L-isoleucine from 2-oxobutanoate: step 2/4. It participates in amino-acid biosynthesis; L-valine biosynthesis; L-valine from pyruvate: step 2/4. Involved in the biosynthesis of branched-chain amino acids (BCAA). Catalyzes an alkyl-migration followed by a ketol-acid reduction of (S)-2-acetolactate (S2AL) to yield (R)-2,3-dihydroxy-isovalerate. In the isomerase reaction, S2AL is rearranged via a Mg-dependent methyl migration to produce 3-hydroxy-3-methyl-2-ketobutyrate (HMKB). In the reductase reaction, this 2-ketoacid undergoes a metal-dependent reduction by NADPH to yield (R)-2,3-dihydroxy-isovalerate. This Heliobacterium modesticaldum (strain ATCC 51547 / Ice1) protein is Ketol-acid reductoisomerase (NADP(+)).